We begin with the raw amino-acid sequence, 281 residues long: 1-acyl-sn-glycerol-3-phosphate acyltransferase (281 aa).

A run of 3 helical transmembrane segments spans residues 40–60 (IFVCFAIVLITAVAWGLIMVL), 71–91 (LGNLYGHIIGGLVIWIYGIPI), and 110–130 (ASPIDAFFVMWLAPIGTVGVA). Residues 109 to 114 (HASPID) carry the HXXXXD motif motif.

Belongs to the 1-acyl-sn-glycerol-3-phosphate acyltransferase family.

The protein localises to the membrane. The catalysed reaction is a 1-acyl-sn-glycero-3-phosphate + an acyl-CoA = a 1,2-diacyl-sn-glycero-3-phosphate + CoA. It participates in phospholipid metabolism; CDP-diacylglycerol biosynthesis; CDP-diacylglycerol from sn-glycerol 3-phosphate: step 2/3. Functionally, converts lysophosphatidic acid (LPA) into phosphatidic acid by incorporating acyl moiety at the 2 position. This enzyme uses erucoyl-CoA as an acyl donor. The polypeptide is 1-acyl-sn-glycerol-3-phosphate acyltransferase (PLSC) (Limnanthes douglasii (Douglas' meadowfoam)).